The following is a 311-amino-acid chain: tRNA-cytidine(32) 2-sulfurtransferase (311 aa).

The PP-loop motif signature appears at 47 to 52; it reads SGGKDS. [4Fe-4S] cluster-binding residues include Cys-122, Cys-125, and Cys-213.

Belongs to the TtcA family. Homodimer. Mg(2+) is required as a cofactor. It depends on [4Fe-4S] cluster as a cofactor.

It localises to the cytoplasm. The catalysed reaction is cytidine(32) in tRNA + S-sulfanyl-L-cysteinyl-[cysteine desulfurase] + AH2 + ATP = 2-thiocytidine(32) in tRNA + L-cysteinyl-[cysteine desulfurase] + A + AMP + diphosphate + H(+). It participates in tRNA modification. In terms of biological role, catalyzes the ATP-dependent 2-thiolation of cytidine in position 32 of tRNA, to form 2-thiocytidine (s(2)C32). The sulfur atoms are provided by the cysteine/cysteine desulfurase (IscS) system. This is tRNA-cytidine(32) 2-sulfurtransferase from Escherichia coli (strain SMS-3-5 / SECEC).